Reading from the N-terminus, the 416-residue chain is Gamma-glutamyl phosphate reductase (416 aa).

It belongs to the gamma-glutamyl phosphate reductase family.

It is found in the cytoplasm. It catalyses the reaction L-glutamate 5-semialdehyde + phosphate + NADP(+) = L-glutamyl 5-phosphate + NADPH + H(+). Its pathway is amino-acid biosynthesis; L-proline biosynthesis; L-glutamate 5-semialdehyde from L-glutamate: step 2/2. Functionally, catalyzes the NADPH-dependent reduction of L-glutamate 5-phosphate into L-glutamate 5-semialdehyde and phosphate. The product spontaneously undergoes cyclization to form 1-pyrroline-5-carboxylate. The chain is Gamma-glutamyl phosphate reductase from Salmonella heidelberg (strain SL476).